The following is a 969-amino-acid chain: Protein translocase subunit SecA (969 aa).

ATP-binding positions include glutamine 99, 117–121 (GEGKT), and aspartate 631.

The protein belongs to the SecA family. In terms of assembly, monomer and homodimer. Part of the essential Sec protein translocation apparatus which comprises SecA, SecYEG and auxiliary proteins SecDF. Other proteins may also be involved.

The protein resides in the cell inner membrane. Its subcellular location is the cytoplasm. It catalyses the reaction ATP + H2O + cellular proteinSide 1 = ADP + phosphate + cellular proteinSide 2.. In terms of biological role, part of the Sec protein translocase complex. Interacts with the SecYEG preprotein conducting channel. Has a central role in coupling the hydrolysis of ATP to the transfer of proteins into and across the cell membrane, serving as an ATP-driven molecular motor driving the stepwise translocation of polypeptide chains across the membrane. This chain is Protein translocase subunit SecA, found in Chlamydia abortus (strain DSM 27085 / S26/3) (Chlamydophila abortus).